A 305-amino-acid polypeptide reads, in one-letter code: Glycerol-3-phosphate dehydrogenase [NAD(P)+] (305 aa).

NADPH-binding residues include F10, R29, and K87. K87, G115, and S117 together coordinate sn-glycerol 3-phosphate. A119 lines the NADPH pocket. Positions 170, 223, 233, 234, and 235 each coordinate sn-glycerol 3-phosphate. The Proton acceptor role is filled by K170. R234 contributes to the NADPH binding site. Residue E255 participates in NADPH binding.

The protein belongs to the NAD-dependent glycerol-3-phosphate dehydrogenase family.

It localises to the cytoplasm. The catalysed reaction is sn-glycerol 3-phosphate + NAD(+) = dihydroxyacetone phosphate + NADH + H(+). It catalyses the reaction sn-glycerol 3-phosphate + NADP(+) = dihydroxyacetone phosphate + NADPH + H(+). It participates in membrane lipid metabolism; glycerophospholipid metabolism. Catalyzes the reduction of the glycolytic intermediate dihydroxyacetone phosphate (DHAP) to sn-glycerol 3-phosphate (G3P), the key precursor for phospholipid synthesis. The protein is Glycerol-3-phosphate dehydrogenase [NAD(P)+] of Cereibacter sphaeroides (strain ATCC 17023 / DSM 158 / JCM 6121 / CCUG 31486 / LMG 2827 / NBRC 12203 / NCIMB 8253 / ATH 2.4.1.) (Rhodobacter sphaeroides).